We begin with the raw amino-acid sequence, 922 residues long: Histidine kinase 5 (922 aa).

2 coiled-coil regions span residues 86-120 (MQDN…EEYK) and 169-205 (KQKA…SQSA). The Histidine kinase domain occupies 373 to 614 (TMSHEIRSPL…TFTFILPYKV (242 aa)). His376 bears the Phosphohistidine; by autocatalysis mark. Disordered regions lie at residues 620-639 (YSDD…EPDD) and 728-773 (NGRC…TEVK). The segment covering 738–747 (SCSSSQASSE) has biased composition (low complexity). Residues 761–773 (SHREEEKAETEVK) are compositionally biased toward basic and acidic residues. The Response regulatory domain occupies 779 to 921 (KILLVEDNKI…KLRECLQQYL (143 aa)). Residues Asp785, Asp828, and Cys830 each coordinate Mg(2+). Residue Asp828 is modified to 4-aspartylphosphate.

Interacts with AHP1, APH2, APH3, APH5 and APH6, but not with APH4. Present in light-grown but not in etiolated seedlings. Mostly expressed in roots flowers and siliques, and, to a lower extent, in stems and leaves, especially in guard cells.

Its subcellular location is the cell membrane. It is found in the cytoplasm. The enzyme catalyses ATP + protein L-histidine = ADP + protein N-phospho-L-histidine.. Functions as a histidine kinase and transmits the stress signal to a downstream MAPK cascade. This protein undergoes an ATP-dependent autophosphorylation at a conserved histidine residue in the kinase core, and a phosphoryl group is then transferred to a conserved aspartate residue in the receiver domain. Negative regulator of the ETR1-dependent abscisic acid (ABA) and ethylene signaling pathway that inhibits the root elongation. Promotes stomatal closure. Regulates stomatal opening by integrating multiple signals via hydrogen peroxide H(2)O(2) homeostasis in guard cells in an ABA-independent manner. May contribute to basal defense mechanisms by closing stomata in the presence of bacterial pathogens. Regulates both hormone levels and ROS production in response to stress. Required for full immunity to bacterial pathogen and necrotrophic fungus. This Arabidopsis thaliana (Mouse-ear cress) protein is Histidine kinase 5 (AHK5).